Consider the following 366-residue polypeptide: Galactoside alpha-(1,2)-fucosyltransferase 1 (366 aa).

The Cytoplasmic segment spans residues 1 to 8 (MWPLSHRH). A helical; Signal-anchor for type II membrane protein membrane pass occupies residues 9-25 (LCLAFLLVCVLSAISFF). The Lumenal portion of the chain corresponds to 26 to 366 (LHIHQDSFPH…LSPLWTLAEP (341 aa)). N-linked (GlcNAc...) asparagine glycosylation is found at asparagine 66, asparagine 302, and asparagine 328.

This sequence belongs to the glycosyltransferase 11 family.

The protein resides in the golgi apparatus. The protein localises to the golgi stack membrane. The catalysed reaction is a beta-D-galactosyl-(1-&gt;4)-N-acetyl-beta-D-glucosaminyl derivative + GDP-beta-L-fucose = an alpha-L-Fuc-(1-&gt;2)-beta-D-Gal-(1-&gt;4)-beta-D-GlcNAc derivative + GDP + H(+). The enzyme catalyses a ganglioside GA1 + GDP-beta-L-fucose = a ganglioside Fuc-GA1 + GDP + H(+). It carries out the reaction a beta-D-Gal-(1-&gt;3)-beta-D-GlcNAc-(1-&gt;3)-beta-D-Gal-(1-&gt;4)-beta-D-Glc-(1&lt;-&gt;1')-Cer(d18:1(4E)) + GDP-beta-L-fucose = alpha-L-fucosyl-(1-&gt;2)- beta-D-galactosyl-(1-&gt;3)-N-acetyl-beta-D-glucosaminyl-(1-&gt;3)-beta-D-galactosyl-(1-&gt;4)-beta-D-glucosyl-(1&lt;-&gt;1')-N-acylsphing-4-enine + GDP + H(+). It catalyses the reaction a neolactoside nLc4Cer(d18:1(4E)) + GDP-beta-L-fucose = a neolactoside IV(2)-alpha-Fuc-nLc4Cer(d18:1(4E)) + GDP + H(+). The catalysed reaction is a ganglioside GM1 + GDP-beta-L-fucose = a ganglioside Fuc-GM1 + GDP + H(+). The enzyme catalyses beta-D-galactosyl-(1-&gt;3)-N-acetyl-D-galactosamine + GDP-beta-L-fucose = alpha-L-fucosyl-(1-&gt;2)-beta-D-galactosyl-(1-&gt;3)-N-acetyl-D-galactosamine + GDP + H(+). The protein operates within protein modification; protein glycosylation. Functionally, catalyzes the transfer of L-fucose, from a guanosine diphosphate-beta-L-fucose, to the terminal galactose residue of glycoconjugates through an alpha(1,2) linkage leading to H antigen synthesis that is an intermediate substrate in the synthesis of ABO blood group antigens. H antigen is essential for maturation of the glomerular layer of the main olfactory bulb, in cell migration and early cell-cell contacts during tumor associated angiogenesis. Preferentially fucosylates soluble lactose and to a lesser extent fucosylates glycolipids gangliosides GA1 and GM1a. The sequence is that of Galactoside alpha-(1,2)-fucosyltransferase 1 from Lagothrix lagotricha (Brown woolly monkey).